We begin with the raw amino-acid sequence, 187 residues long: UPF0301 protein YqgE (187 aa).

The protein belongs to the UPF0301 (AlgH) family.

The chain is UPF0301 protein YqgE from Escherichia coli O7:K1 (strain IAI39 / ExPEC).